Consider the following 324-residue polypeptide: Phospho-N-acetylmuramoyl-pentapeptide-transferase (324 aa).

A run of 10 helical transmembrane segments spans residues 5–25 (GLLV…PLFI), 52–72 (PTMG…IMAI), 77–97 (LGAE…IGFL), 122–142 (VIAI…YIMI), 149–169 (FELG…GSNA), 176–196 (LDGL…IIAV), 201–221 (FGVA…LVFN), 227–247 (VFMG…VAIL), 253–273 (LLVI…IQVI), and 302–322 (VVVT…YIGV).

Belongs to the glycosyltransferase 4 family. MraY subfamily. Mg(2+) is required as a cofactor.

Its subcellular location is the cell membrane. The enzyme catalyses UDP-N-acetyl-alpha-D-muramoyl-L-alanyl-gamma-D-glutamyl-meso-2,6-diaminopimeloyl-D-alanyl-D-alanine + di-trans,octa-cis-undecaprenyl phosphate = di-trans,octa-cis-undecaprenyl diphospho-N-acetyl-alpha-D-muramoyl-L-alanyl-D-glutamyl-meso-2,6-diaminopimeloyl-D-alanyl-D-alanine + UMP. The protein operates within cell wall biogenesis; peptidoglycan biosynthesis. Catalyzes the initial step of the lipid cycle reactions in the biosynthesis of the cell wall peptidoglycan: transfers peptidoglycan precursor phospho-MurNAc-pentapeptide from UDP-MurNAc-pentapeptide onto the lipid carrier undecaprenyl phosphate, yielding undecaprenyl-pyrophosphoryl-MurNAc-pentapeptide, known as lipid I. In Bacillus cereus (strain AH820), this protein is Phospho-N-acetylmuramoyl-pentapeptide-transferase.